A 162-amino-acid chain; its full sequence is 18.5 kDa class IV heat shock protein (162 aa).

Residues Thr-53–Asn-149 form the sHSP domain.

It belongs to the small heat shock protein (HSP20) family. May form oligomeric structures.

It localises to the cytoplasm. This chain is 18.5 kDa class IV heat shock protein (HSP18.5), found in Arabidopsis thaliana (Mouse-ear cress).